Consider the following 199-residue polypeptide: Pyridoxal 5'-phosphate synthase subunit PdxT (199 aa).

47-49 (GES) contributes to the L-glutamine binding site. The active-site Nucleophile is C79. Residues R106 and 133-134 (IR) each bind L-glutamine. Catalysis depends on charge relay system residues H169 and E171.

Belongs to the glutaminase PdxT/SNO family. As to quaternary structure, in the presence of PdxS, forms a dodecamer of heterodimers. Only shows activity in the heterodimer.

It catalyses the reaction aldehydo-D-ribose 5-phosphate + D-glyceraldehyde 3-phosphate + L-glutamine = pyridoxal 5'-phosphate + L-glutamate + phosphate + 3 H2O + H(+). The enzyme catalyses L-glutamine + H2O = L-glutamate + NH4(+). The protein operates within cofactor biosynthesis; pyridoxal 5'-phosphate biosynthesis. Functionally, catalyzes the hydrolysis of glutamine to glutamate and ammonia as part of the biosynthesis of pyridoxal 5'-phosphate. The resulting ammonia molecule is channeled to the active site of PdxS. The protein is Pyridoxal 5'-phosphate synthase subunit PdxT of Desulfitobacterium hafniense (strain Y51).